Reading from the N-terminus, the 485-residue chain is Membrane-bound lytic murein transglycosylase F (485 aa).

A signal peptide spans 1–29; sequence MFAHTALRQRCAKWLLATGLFLLLGACVE. Residues 30–267 form a non-LT domain region; it reads KPSTLERVKE…RLKDRYYGHV (238 aa). Positions 268-485 are LT domain; that stretch reads DVLGYVGAYT…DKPADKSSPM (218 aa). Glutamate 314 is a catalytic residue. Residues 465–485 form a disordered region; that stretch reads EGNLHVPGVNKDKPADKSSPM. Positions 474–485 are enriched in basic and acidic residues; it reads NKDKPADKSSPM.

This sequence in the N-terminal section; belongs to the bacterial solute-binding protein 3 family. In the C-terminal section; belongs to the transglycosylase Slt family.

It is found in the cell outer membrane. It catalyses the reaction Exolytic cleavage of the (1-&gt;4)-beta-glycosidic linkage between N-acetylmuramic acid (MurNAc) and N-acetylglucosamine (GlcNAc) residues in peptidoglycan, from either the reducing or the non-reducing ends of the peptidoglycan chains, with concomitant formation of a 1,6-anhydrobond in the MurNAc residue.. Murein-degrading enzyme that degrades murein glycan strands and insoluble, high-molecular weight murein sacculi, with the concomitant formation of a 1,6-anhydromuramoyl product. Lytic transglycosylases (LTs) play an integral role in the metabolism of the peptidoglycan (PG) sacculus. Their lytic action creates space within the PG sacculus to allow for its expansion as well as for the insertion of various structures such as secretion systems and flagella. The sequence is that of Membrane-bound lytic murein transglycosylase F from Pseudomonas putida (strain ATCC 47054 / DSM 6125 / CFBP 8728 / NCIMB 11950 / KT2440).